Consider the following 584-residue polypeptide: A-type ATP synthase subunit A (584 aa).

233–240 (GPFGSGKT) contacts ATP.

The protein belongs to the ATPase alpha/beta chains family. In terms of assembly, has multiple subunits with at least A(3), B(3), C, D, E, F, H, I and proteolipid K(x).

The protein resides in the cell membrane. The enzyme catalyses ATP + H2O + 4 H(+)(in) = ADP + phosphate + 5 H(+)(out). Its function is as follows. Component of the A-type ATP synthase that produces ATP from ADP in the presence of a proton gradient across the membrane. The A chain is the catalytic subunit. This is A-type ATP synthase subunit A from Methanothermobacter thermautotrophicus (strain ATCC 29096 / DSM 1053 / JCM 10044 / NBRC 100330 / Delta H) (Methanobacterium thermoautotrophicum).